The primary structure comprises 122 residues: MNAALKRRQARLKRQVRVRRKLRGTPEMPRLCVFRSAKHIYAQIIEDVTGKTLVSASTVNSDVVEGLENTGNVEAAKAVGKAIAQKALGMDIKNVVFDRNGFLYHGRVKTLAEAAREAGLSF.

This sequence belongs to the universal ribosomal protein uL18 family. As to quaternary structure, part of the 50S ribosomal subunit; part of the 5S rRNA/L5/L18/L25 subcomplex. Contacts the 5S and 23S rRNAs.

This is one of the proteins that bind and probably mediate the attachment of the 5S RNA into the large ribosomal subunit, where it forms part of the central protuberance. The polypeptide is Large ribosomal subunit protein uL18 (Syntrophotalea carbinolica (strain DSM 2380 / NBRC 103641 / GraBd1) (Pelobacter carbinolicus)).